The primary structure comprises 937 residues: Isoleucine--tRNA ligase (937 aa).

The 'HIGH' region signature appears at 58–68; sequence PYANGSIHIGH. E561 is a binding site for L-isoleucyl-5'-AMP. The 'KMSKS' region motif lies at 602–606; that stretch reads KMSKS. ATP is bound at residue K605. Zn(2+) contacts are provided by C900, C903, C920, and C923.

This sequence belongs to the class-I aminoacyl-tRNA synthetase family. IleS type 1 subfamily. In terms of assembly, monomer. Zn(2+) is required as a cofactor.

Its subcellular location is the cytoplasm. The catalysed reaction is tRNA(Ile) + L-isoleucine + ATP = L-isoleucyl-tRNA(Ile) + AMP + diphosphate. Its function is as follows. Catalyzes the attachment of isoleucine to tRNA(Ile). As IleRS can inadvertently accommodate and process structurally similar amino acids such as valine, to avoid such errors it has two additional distinct tRNA(Ile)-dependent editing activities. One activity is designated as 'pretransfer' editing and involves the hydrolysis of activated Val-AMP. The other activity is designated 'posttransfer' editing and involves deacylation of mischarged Val-tRNA(Ile). This chain is Isoleucine--tRNA ligase, found in Photorhabdus laumondii subsp. laumondii (strain DSM 15139 / CIP 105565 / TT01) (Photorhabdus luminescens subsp. laumondii).